A 266-amino-acid polypeptide reads, in one-letter code: Killer cell lectin-like receptor 8 (266 aa).

The Cytoplasmic portion of the chain corresponds to 1–44 (MSEQEVTFPTMRFHKSSGLNSQVRLEGTQRSRKAGLRVCSVPWQ). A helical; Signal-anchor for type II membrane protein membrane pass occupies residues 45–66 (LIVIALGILCSLRLVIVAVFVT). Over 67 to 266 (KFFQYSQHKQ…CGKKLDKFPD (200 aa)) the chain is Extracellular. N-linked (GlcNAc...) asparagine glycans are attached at residues N87 and N104. Residues 143-261 (GVKYWFCYGT…PYYCICGKKL (119 aa)) enclose the C-type lectin domain. Disulfide bonds link C149/C154, C167/C255, C171/C257, and C236/C249.

As to quaternary structure, homodimer; disulfide-linked. Interacts with the adapter protein TYROBP/DAP12; the interaction leads to natural killer cell activation.

Its subcellular location is the cell membrane. Functionally, receptor on natural killer (NK) cells for class I MHC. This Mus musculus (Mouse) protein is Killer cell lectin-like receptor 8 (Klra8).